The primary structure comprises 480 residues: MKAEALFDLDPGVKVRTRFAPSPTGYLHVGGARTALYSWLYAKHHQGEFVLRIEDTDLERSTPEATAAILEGMAWLNLAWEHGPYFQTKRFDRYNQVIDQMIEQGLAYRCYCSKERLEDLRNTQEQNKQKPRYDRHCLGDHKHSPEQPHVVRFKNPTEGSVVFEDAVRGRIEISNAELDDLIIRRTDGSPTYNFCVVVDDWDMGITHVVRGEDHINNTPRQINILKALGAPIPTYAHVSMILGDDGQKLSKRHGAVSVMQYRDDGYLPEALLNYLVRLGWGHGDQEIFSVEEMIKLFELESVSKSASAFNTEKLLWLNHHYIRELPAEYVAKHLAWHYQDQGIDTSNGPALEDIVKMLAERCKTLKEMAAASRYFFEDFDSFDEAAVKKHFKVAAIEPLEKVKEKLTALDSWDLHSTHQAIEQTAAELELGMGKVGMPLRVAVTGSGQSPSMDVTLVGIGKARTLVRIQKAIDFIKSQNV.

Residues 21-31 carry the 'HIGH' region motif; that stretch reads PSPTGYLHVGG. Residues 122 to 146 are compositionally biased toward basic and acidic residues; sequence NTQEQNKQKPRYDRHCLGDHKHSPE. Positions 122–149 are disordered; that stretch reads NTQEQNKQKPRYDRHCLGDHKHSPEQPH. The 'KMSKS' region signature appears at 248–252; sequence KLSKR. ATP is bound at residue Lys-251.

Belongs to the class-I aminoacyl-tRNA synthetase family. Glutamate--tRNA ligase type 1 subfamily. In terms of assembly, monomer.

Its subcellular location is the cytoplasm. The enzyme catalyses tRNA(Glu) + L-glutamate + ATP = L-glutamyl-tRNA(Glu) + AMP + diphosphate. Its function is as follows. Catalyzes the attachment of glutamate to tRNA(Glu) in a two-step reaction: glutamate is first activated by ATP to form Glu-AMP and then transferred to the acceptor end of tRNA(Glu). In Pasteurella multocida (strain Pm70), this protein is Glutamate--tRNA ligase.